Reading from the N-terminus, the 33-residue chain is Protamine (33 aa).

A disordered region spans residues 1 to 33 (MPRRRRSSSRPVRRRRRPRVSRRRRRRGGRRRR).

Testis.

It is found in the nucleus. The protein localises to the chromosome. Its function is as follows. Protamines substitute for histones in the chromatin of sperm during the haploid phase of spermatogenesis. They compact sperm DNA into a highly condensed, stable and inactive complex. The sequence is that of Protamine from Oncorhynchus keta (Chum salmon).